The following is a 191-amino-acid chain: Adenylate kinase (191 aa).

9 to 17 (GVPGVGATT) provides a ligand contact to ATP.

This sequence belongs to the archaeal adenylate kinase family.

It is found in the cytoplasm. The catalysed reaction is AMP + ATP = 2 ADP. The sequence is that of Adenylate kinase from Methanopyrus kandleri (strain AV19 / DSM 6324 / JCM 9639 / NBRC 100938).